We begin with the raw amino-acid sequence, 537 residues long: Trypsin-resistant surface T6 protein (537 aa).

The first 22 residues, 1–22 (MLACLAILAVVGLGMTRVSALS), serve as a signal peptide directing secretion. Residues 310 to 330 (GNTYDNLDKKPDKGNGITSKE) are hydrophilic. An LPXTG sorting signal motif is present at residues 504–508 (LPSTG). At T507 the chain carries Pentaglycyl murein peptidoglycan amidated threonine. A propeptide spans 508 to 537 (GSIGTYLFKAIGSAAMIGAIGIYIVKRRKA) (removed by sortase).

It localises to the secreted. It is found in the cell wall. The sequence is that of Trypsin-resistant surface T6 protein (tee6) from Streptococcus pyogenes serotype M6 (strain ATCC BAA-946 / MGAS10394).